A 448-amino-acid chain; its full sequence is Glucose-6-phosphate isomerase (448 aa).

The active-site Proton donor is E290. Active-site residues include H311 and K425.

It belongs to the GPI family.

The protein localises to the cytoplasm. The enzyme catalyses alpha-D-glucose 6-phosphate = beta-D-fructose 6-phosphate. It functions in the pathway carbohydrate biosynthesis; gluconeogenesis. It participates in carbohydrate degradation; glycolysis; D-glyceraldehyde 3-phosphate and glycerone phosphate from D-glucose: step 2/4. Functionally, catalyzes the reversible isomerization of glucose-6-phosphate to fructose-6-phosphate. This is Glucose-6-phosphate isomerase from Oceanobacillus iheyensis (strain DSM 14371 / CIP 107618 / JCM 11309 / KCTC 3954 / HTE831).